Consider the following 634-residue polypeptide: Probable potassium transport system protein Kup (634 aa).

Transmembrane regions (helical) follow at residues 21-41 (IILS…LYTL), 61-81 (ILSL…VAVI), 110-130 (IYIV…DGVI), 148-168 (PHMK…LFLC), 180-200 (FGPI…YNIA), 217-237 (FFLE…LAVT), 258-278 (WMYV…ALVL), 296-316 (GLYP…QALI), 348-368 (IYVP…VIGF), 377-397 (AYGV…IIYA), 408-428 (LWMM…ANII), and 432-452 (DGAW…RTWL).

It belongs to the HAK/KUP transporter (TC 2.A.72) family.

The protein resides in the cell inner membrane. The enzyme catalyses K(+)(in) + H(+)(in) = K(+)(out) + H(+)(out). Functionally, transport of potassium into the cell. Likely operates as a K(+):H(+) symporter. The chain is Probable potassium transport system protein Kup from Xylella fastidiosa (strain 9a5c).